Consider the following 217-residue polypeptide: Putative N-acetylmuramoyl-L-alanine amidase (217 aa).

A MurNAc-LAA domain is found at 3 to 206; that stretch reads IAIDAGHGGQ…ISKSISIALK (204 aa).

This sequence belongs to the N-acetylmuramoyl-L-alanine amidase 3 family.

It localises to the secreted. The catalysed reaction is Hydrolyzes the link between N-acetylmuramoyl residues and L-amino acid residues in certain cell-wall glycopeptides.. Its function is as follows. Cell-wall hydrolase involved in septum cleavage during cell division. The chain is Putative N-acetylmuramoyl-L-alanine amidase (amiB) from Buchnera aphidicola subsp. Baizongia pistaciae (strain Bp).